Consider the following 555-residue polypeptide: Urocanate hydratase (555 aa).

Residues 51–52, Q129, 175–177, E195, R200, 241–242, 262–266, 272–273, and Y321 each bind NAD(+); these read GG, GMG, NA, QTSAH, and YL. C409 is a catalytic residue. Position 491 (G491) interacts with NAD(+).

This sequence belongs to the urocanase family. It depends on NAD(+) as a cofactor.

The protein localises to the cytoplasm. It carries out the reaction 4-imidazolone-5-propanoate = trans-urocanate + H2O. It participates in amino-acid degradation; L-histidine degradation into L-glutamate; N-formimidoyl-L-glutamate from L-histidine: step 2/3. Its function is as follows. Catalyzes the conversion of urocanate to 4-imidazolone-5-propionate. This is Urocanate hydratase from Rhizorhabdus wittichii (strain DSM 6014 / CCUG 31198 / JCM 15750 / NBRC 105917 / EY 4224 / RW1) (Sphingomonas wittichii).